A 227-amino-acid chain; its full sequence is Cytochrome c oxidase subunit 2 (227 aa).

Topologically, residues 1–14 (MAYPFQLGLQDATS) are mitochondrial intermembrane. A helical transmembrane segment spans residues 15-45 (PIMEELTNFHDHTLMIVFLISSLVLYIISLM). Over 46-59 (LTTKLTHTSTMDAQ) the chain is Mitochondrial matrix. A helical transmembrane segment spans residues 60-87 (EVETIWTILPAAILVLIALPSLRILYMM). Residues 88 to 227 (DEINNPALTV…YFENWSASMI (140 aa)) are Mitochondrial intermembrane-facing. 6 residues coordinate Cu cation: His161, Cys196, Glu198, Cys200, His204, and Met207. Residue Glu198 coordinates Mg(2+). Tyr218 is subject to Phosphotyrosine.

The protein belongs to the cytochrome c oxidase subunit 2 family. As to quaternary structure, component of the cytochrome c oxidase (complex IV, CIV), a multisubunit enzyme composed of 14 subunits. The complex is composed of a catalytic core of 3 subunits MT-CO1, MT-CO2 and MT-CO3, encoded in the mitochondrial DNA, and 11 supernumerary subunits COX4I, COX5A, COX5B, COX6A, COX6B, COX6C, COX7A, COX7B, COX7C, COX8 and NDUFA4, which are encoded in the nuclear genome. The complex exists as a monomer or a dimer and forms supercomplexes (SCs) in the inner mitochondrial membrane with NADH-ubiquinone oxidoreductase (complex I, CI) and ubiquinol-cytochrome c oxidoreductase (cytochrome b-c1 complex, complex III, CIII), resulting in different assemblies (supercomplex SCI(1)III(2)IV(1) and megacomplex MCI(2)III(2)IV(2)). Found in a complex with TMEM177, COA6, COX18, COX20, SCO1 and SCO2. Interacts with TMEM177 in a COX20-dependent manner. Interacts with COX20. Interacts with COX16. It depends on Cu cation as a cofactor.

The protein resides in the mitochondrion inner membrane. It catalyses the reaction 4 Fe(II)-[cytochrome c] + O2 + 8 H(+)(in) = 4 Fe(III)-[cytochrome c] + 2 H2O + 4 H(+)(out). Its function is as follows. Component of the cytochrome c oxidase, the last enzyme in the mitochondrial electron transport chain which drives oxidative phosphorylation. The respiratory chain contains 3 multisubunit complexes succinate dehydrogenase (complex II, CII), ubiquinol-cytochrome c oxidoreductase (cytochrome b-c1 complex, complex III, CIII) and cytochrome c oxidase (complex IV, CIV), that cooperate to transfer electrons derived from NADH and succinate to molecular oxygen, creating an electrochemical gradient over the inner membrane that drives transmembrane transport and the ATP synthase. Cytochrome c oxidase is the component of the respiratory chain that catalyzes the reduction of oxygen to water. Electrons originating from reduced cytochrome c in the intermembrane space (IMS) are transferred via the dinuclear copper A center (CU(A)) of subunit 2 and heme A of subunit 1 to the active site in subunit 1, a binuclear center (BNC) formed by heme A3 and copper B (CU(B)). The BNC reduces molecular oxygen to 2 water molecules using 4 electrons from cytochrome c in the IMS and 4 protons from the mitochondrial matrix. In Rhabdomys pumilio (Four-striped grass mouse), this protein is Cytochrome c oxidase subunit 2 (MT-CO2).